Consider the following 555-residue polypeptide: Transcriptional adapter 2b (555 aa).

The ZZ-type zinc-finger motif lies at 8–63 (FTKYNCTNCQDDIQGIRVHCAECENFDLCLQCFAAGAEIGAHQNNHSYQFMDTGTS). Zn(2+) contacts are provided by cysteine 13, cysteine 16, cysteine 27, cysteine 30, cysteine 36, cysteine 39, histidine 49, and histidine 53. The 53-residue stretch at 69–121 (RGKGAWTAREEIRLLDAIEQYGFGNWEDISKHIETKSAEDAKEEYVNKFVNGT) folds into the SANT domain. Residues 318–372 (THRSTGPYGHGKTDHTHTSNGSHRPPSSSLHSPQPNLRKVEMSSGGEASSNSIAP) are disordered. The segment covering 339-352 (SHRPPSSSLHSPQP) has biased composition (low complexity). Residues 363 to 372 (GEASSNSIAP) are compositionally biased toward polar residues.

Component of histone acetyltransferase complexes containing Gcn5 and Ada3. In terms of assembly, can heterooligomerize with Isoform A. Component of the Spt-Ada-Gcn5 acetyltransferase (SAGA) complex consisting of Ada1, Ada2b (Isoform B), Ada3, wda, Saf6, Spt3, Spt7, Spt20, Taf9, Taf10b, Taf12, Nipped-A/Tra1, Sf3b3, Sf3b5, not/nonstop, Sgf11, Sgf29, e(y)2, Atxn7 and Gcn5. Taf5 and Taf10, which has partially redundant properties with Taf10b, may also be part of this complex. Interacts (via C-terminus) with Spt3 and Taf12; the interactions are direct. Interacts with Ada3; the interaction is probably direct. May also interact directly with Spt7 and Gcn5. Interacts with p53. As to quaternary structure, can heterooligomerize with Isoform B. Component of the Chiffon histone acetyltransferase (CHAT) complex consisting of Ada3, Sgf29, Gcn5, chif/chiffon and Ada2b (Isoform A). Interacts (via N-terminus) with Gcn5 and Ada3; the interaction is direct. Can interact directly with Spt7 in vitro but in vivo this interaction is not stable probably due to the absence of other SAGA components. Interacts with p53. In terms of tissue distribution, expressed in nurse cells of stage 10 egg chambers and transcripts are dumped into the oocyte when nurse cells degenerate at late oogenesis.

It localises to the nucleus. In terms of biological role, component of several Gcn5-containing histone acetyltransferase complexes that regulate nucleosome organization; involved in acetylation of histone H3, particularly on Lys-10 (H3K9ac) and Lys-15 (H3K14ac). Regulates the transcription of a subset of genes during development; affects recruitment of RNA polymerase II. May be involved in the function of some acidic activation domains, which activate transcription at distant sites. Involved in the p53-dependent apoptosis pathway response to DNA damage by genotoxic agents. Functionally, component of the SAGA histone acetyltransferase complex, which predominantly acetylates histone H3. Its function is as follows. Component of the CHAT histone acetyltransferase complex, which predominantly acetylates histone H3. This Drosophila melanogaster (Fruit fly) protein is Transcriptional adapter 2b.